The sequence spans 154 residues: 6,7-dimethyl-8-ribityllumazine synthase (154 aa).

5-amino-6-(D-ribitylamino)uracil is bound by residues tryptophan 22, 56–58 (AWE), and 80–82 (CVV). 85–86 (DT) contacts (2S)-2-hydroxy-3-oxobutyl phosphate. Residue histidine 88 is the Proton donor of the active site. A 5-amino-6-(D-ribitylamino)uracil-binding site is contributed by asparagine 113. (2S)-2-hydroxy-3-oxobutyl phosphate is bound at residue arginine 127.

It belongs to the DMRL synthase family. Forms an icosahedral capsid composed of 60 subunits, arranged as a dodecamer of pentamers.

The enzyme catalyses (2S)-2-hydroxy-3-oxobutyl phosphate + 5-amino-6-(D-ribitylamino)uracil = 6,7-dimethyl-8-(1-D-ribityl)lumazine + phosphate + 2 H2O + H(+). The protein operates within cofactor biosynthesis; riboflavin biosynthesis; riboflavin from 2-hydroxy-3-oxobutyl phosphate and 5-amino-6-(D-ribitylamino)uracil: step 1/2. Its function is as follows. Catalyzes the formation of 6,7-dimethyl-8-ribityllumazine by condensation of 5-amino-6-(D-ribitylamino)uracil with 3,4-dihydroxy-2-butanone 4-phosphate. This is the penultimate step in the biosynthesis of riboflavin. This is 6,7-dimethyl-8-ribityllumazine synthase from Xylella fastidiosa (strain 9a5c).